Reading from the N-terminus, the 103-residue chain is Transcription factor S (103 aa).

Zn(2+) is bound by residues cysteine 4, cysteine 7, cysteine 20, cysteine 23, cysteine 64, cysteine 67, cysteine 92, and cysteine 95. A C4-type zinc finger spans residues 4–23; the sequence is CPKCKSLMIYQGDKLVCRKC. A TFIIS-type zinc finger spans residues 60-100; it reads TKAICPACGHNEAFWWLRQLRAADESEVRFFRCTKCGKTWR.

It belongs to the archaeal RpoM/eukaryotic RPA12/RPB9/RPC11 RNA polymerase family.

Its function is as follows. Induces RNA cleavage activity in the RNA polymerase. In its presence, the cleavage activity of the RNA polymerase truncates the RNA back to position +15 in a stepwise manner by releasing mainly dinucleotides from the 3'-end of the nascent RNA. The truncated RNAs are able to continue elongation. Involved in transcriptional proofreading and fidelity. Misincorporation of nucleotides during elongation of transcription leads to arrested elongation complexes which are rescued by TFS-promoted removal of a dinucleotide from the 3'-end. TFS is able to induce a cleavage resynthesis cycle in stalled elongation complexes (resulting from the next missing nucleotide or a reduced incorporation rate of a wrong nucleotide) preventing misincorporation and enabling proofreading in a post-incorporation manner. Pausing of elongation complexes is the main determinant of TFS-induced RNA cleavage. The polypeptide is Transcription factor S (Archaeoglobus fulgidus (strain ATCC 49558 / DSM 4304 / JCM 9628 / NBRC 100126 / VC-16)).